The following is a 1577-amino-acid chain: Disco-interacting protein 2 homolog B-A (1577 aa).

The 118-residue stretch at 7 to 124 (DLAALPKEVR…PMPTKRRSAF (118 aa)) folds into the DMAP1-binding domain. Disordered regions lie at residues 109–148 (EEKM…GSLR), 173–204 (VQGS…QGQT), 217–239 (DTNS…DRNS), and 253–273 (SRGQ…AHSR). The span at 124–140 (FVQSPAENCTPPDTSSA) shows a compositional bias: polar residues. Low complexity predominate over residues 176–187 (SSTSSSASSTLS). A compositionally biased stretch (polar residues) spans 217–236 (DTNSSSGSVPPDVTSTAPQD).

Belongs to the DIP2 family.

The protein resides in the cell projection. It localises to the dendrite. Its subcellular location is the axon. It is found in the perikaryon. Negatively regulates axonal outgrowth and is essential for normal synaptic transmission. Not required for regulation of axon polarity. Promotes acetylation of alpha-tubulin. The chain is Disco-interacting protein 2 homolog B-A (dip2ba) from Danio rerio (Zebrafish).